Here is a 192-residue protein sequence, read N- to C-terminus: UPF0149 protein YE3397 (192 aa).

It belongs to the UPF0149 family.

The chain is UPF0149 protein YE3397 from Yersinia enterocolitica serotype O:8 / biotype 1B (strain NCTC 13174 / 8081).